A 1357-amino-acid chain; its full sequence is DNA-directed RNA polymerase subunit beta (1357 aa).

This sequence belongs to the RNA polymerase beta chain family. As to quaternary structure, the RNAP catalytic core consists of 2 alpha, 1 beta, 1 beta' and 1 omega subunit. When a sigma factor is associated with the core the holoenzyme is formed, which can initiate transcription.

It catalyses the reaction RNA(n) + a ribonucleoside 5'-triphosphate = RNA(n+1) + diphosphate. In terms of biological role, DNA-dependent RNA polymerase catalyzes the transcription of DNA into RNA using the four ribonucleoside triphosphates as substrates. The polypeptide is DNA-directed RNA polymerase subunit beta (Nitrosomonas europaea (strain ATCC 19718 / CIP 103999 / KCTC 2705 / NBRC 14298)).